Here is a 744-residue protein sequence, read N- to C-terminus: Spalt-like protein sem-4 (744 aa).

The disordered stretch occupies residues 6 to 32 (AEMAAVSSRRKQSKPRRMSGEGDAMMS). The span at 13-22 (SRRKQSKPRR) shows a compositional bias: basic residues. 4 C2H2-type zinc fingers span residues 99–124 (SSCP…LDAH), 305–327 (NQCI…YRTH), 333–355 (FKCK…MGVH), and 411–433 (QQCP…ITEH). A compositionally biased stretch (polar residues) spans 487–497 (KNDSSPNTDTS). Disordered regions lie at residues 487–530 (KNDS…RQDI) and 542–562 (KLEE…PKNE). Residues 499–509 (VEEKITRDDPP) are compositionally biased toward basic and acidic residues. Residues 513–525 (SLSPSNSSDSSSS) show a composition bias toward low complexity. Residues 551–561 (QQVSTTPNPKN) are compositionally biased toward polar residues. C2H2-type zinc fingers lie at residues 589-611 (HQCG…MRTH), 617-639 (FKCD…MGTH), and 701-723 (TVCS…LKEH). Residues 725 to 744 (NNGSSAAPTPLASAATPPPS) form a disordered region. The span at 728–744 (SSAAPTPLASAATPPPS) shows a compositional bias: low complexity.

The protein belongs to the sal C2H2-type zinc-finger protein family.

It localises to the nucleus. Functionally, transcription factor, involved in positive and negative modulation of transcription. Binds to multiple DNA sequence motifs in the regulatory elements of target genes, including homeobox selector egl-5 and LIM homeobox mec-3. Involved in cell-fate regulation in multiple lineages, including neuronal, mesodermal and vulval. Required to regulate the fate of PLM touch receptor neurons, acting via negative modulation of transcription of egl-5 and mec-3. May modulate gene expression by interacting with different transcription factors during neuronal and mesodermal cell development. Promotes the proliferative sex myoblast (SM) fate, in a cell autonomous manner, acting via the SoxC transcription factor sem-2. Involved in vulval cell-fate determination, acting by regulating expression of homeobox protein lin-39, and may link lin-39 to incoming signaling pathways. Plays a role in detoxification of reactive oxygen species (ROS), by regulating expression of transcription factor skn-1 and the phase II detoxification genes. The protein is Spalt-like protein sem-4 of Caenorhabditis elegans.